The following is a 187-amino-acid chain: Inner membrane-spanning protein YciB (187 aa).

Helical transmembrane passes span 22 to 42 (IYVA…VTYA), 50 to 70 (MQLI…FFHD), 80 to 100 (IIYV…KSVV), 118 to 138 (INWA…YIAY), and 148 to 168 (FKVF…GVYI).

Belongs to the YciB family.

Its subcellular location is the cell inner membrane. Functionally, plays a role in cell envelope biogenesis, maintenance of cell envelope integrity and membrane homeostasis. This Vibrio parahaemolyticus serotype O3:K6 (strain RIMD 2210633) protein is Inner membrane-spanning protein YciB.